Reading from the N-terminus, the 360-residue chain is Metalloendoproteinase 5-MMP (360 aa).

The signal sequence occupies residues 1 to 20; the sequence is MRTLLLTILIFFFTVNPISA. The propeptide at 21–142 is activation peptide; that stretch reads KFYTNVSSIP…GGKILRTTEK (122 aa). Residues asparagine 25, asparagine 36, and asparagine 78 are each glycosylated (N-linked (GlcNAc...) asparagine). A Cysteine switch motif is present at residues 117–124; it reads PRCGNPDL. Residue cysteine 119 coordinates Zn(2+). 2 N-linked (GlcNAc...) asparagine glycosylation sites follow: asparagine 168 and asparagine 191. Histidine 270 serves as a coordination point for Zn(2+). Glutamate 271 is an active-site residue. Zn(2+) is bound by residues histidine 274 and histidine 280. The interval 312-336 is disordered; it reads LYGGNPNGDGGGSKPSRESQSTGGD. Serine 337 is lipidated: GPI-anchor amidated serine. Positions 338–360 are cleaved as a propeptide — removed in mature form; sequence VRRWRGWMISLSSIATCIFLISV.

This sequence belongs to the peptidase M10A family. Matrix metalloproteinases (MMPs) subfamily. It depends on Zn(2+) as a cofactor. Mostly expressed in leaves, roots and stems, and, to a lower extent, in flowers.

It localises to the cell membrane. With respect to regulation, repressed by acetohydroxamic acid (AHA). Functionally, matrix metalloproteinases (MMPs) or matrixins may play a role in the degradation and remodeling of the extracellular matrix (ECM) during development or in response to stresses. Active on Mca-KESAbuNLFVLKDpaR-NH(2) (QF75) and, to some extent, on McaPLGLDpaAR-NH(2) (QF24), myelin basic protein (MBP) and beta-casein. This Arabidopsis thaliana (Mouse-ear cress) protein is Metalloendoproteinase 5-MMP.